A 465-amino-acid polypeptide reads, in one-letter code: uncharacterized protein (465 aa).

Disordered stretches follow at residues 1–55, 70–164, and 221–313; these read MNSS…SSHQ, DFSE…VEGQ, and TTDN…KQRV. Residues 40–50 show a composition bias toward basic and acidic residues; that stretch reads ENYKDNSDHSN. Positions 73–82 are enriched in polar residues; sequence ESFNDNQNLK. The span at 83 to 134 shows a compositional bias: low complexity; it reads NFNTTDNNFNDDYNNDYDSNNDSNNDSNNDSNNDYDNESNNYFNNDSNNDSN. The segment covering 141–150 has biased composition (basic and acidic residues); it reads ETTKHKLPIE. The segment covering 221 to 235 has biased composition (low complexity); that stretch reads TTDNQSNTESSQENN. Basic and acidic residues-rich tracts occupy residues 236 to 249 and 259 to 275; these read VIKK…DKQP and IVPK…KSIK. Over residues 288–306 the composition is skewed to polar residues; sequence IDQSNKLGKSYNTNNNNSK. Positions 390–423 form a coiled coil; that stretch reads NKASIAELKKMRLEQRKREIEEKRRQVENKKPDS.

This is an uncharacterized protein from Acanthamoeba polyphaga mimivirus (APMV).